A 239-amino-acid chain; its full sequence is Small ribosomal subunit protein uS3c (239 aa).

The KH type-2 domain maps to 43 to 139; the sequence is IKNYIQKNRK…RLNISIEKVK (97 aa). Residues 50–80 are disordered; it reads NRKKSSNRKLESDSSSEVITHNRKNDSGSSS.

It belongs to the universal ribosomal protein uS3 family. In terms of assembly, part of the 30S ribosomal subunit.

It is found in the plastid. It localises to the chloroplast. The chain is Small ribosomal subunit protein uS3c (rps3) from Lolium perenne (Perennial ryegrass).